We begin with the raw amino-acid sequence, 114 residues long: MTEVKLDFQKQGGLIPAIILDHTSKEVLMLAYLNEEAYQLTRTSGQMWYWSRSRQELWHKGATSGHYQTVKKITADCDLDTLLIEVDQLGAACHTGAKSCFFHPIWDEKDGKTD.

Aspartate 76 is a binding site for Mg(2+). Cysteine 77 contacts Zn(2+). 2 residues coordinate Mg(2+): aspartate 78 and aspartate 80. Zn(2+) is bound by residues cysteine 93 and cysteine 100.

It belongs to the PRA-CH family. As to quaternary structure, homodimer. The cofactor is Mg(2+). Requires Zn(2+) as cofactor.

The protein localises to the cytoplasm. It catalyses the reaction 1-(5-phospho-beta-D-ribosyl)-5'-AMP + H2O = 1-(5-phospho-beta-D-ribosyl)-5-[(5-phospho-beta-D-ribosylamino)methylideneamino]imidazole-4-carboxamide. It participates in amino-acid biosynthesis; L-histidine biosynthesis; L-histidine from 5-phospho-alpha-D-ribose 1-diphosphate: step 3/9. In terms of biological role, catalyzes the hydrolysis of the adenine ring of phosphoribosyl-AMP. In Streptococcus sanguinis (strain SK36), this protein is Phosphoribosyl-AMP cyclohydrolase.